A 561-amino-acid chain; its full sequence is uncharacterized protein (561 aa).

The first 24 residues, 1 to 24 (MELGAWRSILYIAFLFAITRHAFC), serve as a signal peptide directing secretion. Residues 25-509 (KAVNLVHSPE…GYVYLSEIKQ (485 aa)) are Lumenal-facing. A helical transmembrane segment spans residues 510-530 (YSSLILISLWISLILFVSFLN). Over 531–561 (RRLILHYSFESVHQLKTLTRKFIYSSLLKQD) the chain is Cytoplasmic.

Its subcellular location is the endoplasmic reticulum membrane. It is found in the golgi apparatus membrane. This is an uncharacterized protein from Schizosaccharomyces pombe (strain 972 / ATCC 24843) (Fission yeast).